Consider the following 70-residue polypeptide: MEQLAQRVEDLEMKLAFQESTIDVLDQQVIKLNDLLAEQQHQLRVLISKLQSVEPSNMATQAEETPPPHY.

The protein belongs to the SlyX family.

This is Protein SlyX homolog from Shewanella woodyi (strain ATCC 51908 / MS32).